The chain runs to 1113 residues: Receptor-type guanylate cyclase gcy-18 (1113 aa).

Positions 1–18 (MLKTLLFILIFFNIPIIA) are cleaved as a signal peptide. Residues 19-499 (IEEIPDIKEN…RGQRCSYLLE (481 aa)) lie on the Extracellular side of the membrane. N72, N369, and N456 each carry an N-linked (GlcNAc...) asparagine glycan. A helical membrane pass occupies residues 500–520 (ISVGSLIILLILISVVFFFLF). Residues 521–1113 (RYCENKQLEK…TNYIQNVEGV (593 aa)) lie on the Cytoplasmic side of the membrane. The 306-residue stretch at 543-848 (IDEEQVKSMM…RVRLNTEMVL (306 aa)) folds into the Protein kinase domain. A coiled-coil region spans residues 853-884 (SLVDQMMKMMEQYANNLEKLVAERTGMLEEAN). Positions 918 to 1048 (TILFSDIVGF…DTVNVSSRME (131 aa)) constitute a Guanylate cyclase domain. Mg(2+) is bound by residues D923, I924, and D967.

The protein belongs to the adenylyl cyclase class-4/guanylyl cyclase family. Expressed specifically in AFD sensory neurons.

The protein localises to the cell membrane. Its subcellular location is the cell projection. The protein resides in the cilium. The catalysed reaction is GTP = 3',5'-cyclic GMP + diphosphate. Guanylate cyclase involved in the production of the second messenger cGMP. Regulates thermotaxis responses in AFD sensory neurons. May regulate AFD neuronal activity such as calcium responses to temperature gradients. This is Receptor-type guanylate cyclase gcy-18 from Caenorhabditis elegans.